A 326-amino-acid chain; its full sequence is Beta-ketoacyl-[acyl-carrier-protein] synthase III (326 aa).

Catalysis depends on residues Cys113 and His253. The segment at 254 to 258 (QANIR) is ACP-binding. Residue Asn283 is part of the active site.

It belongs to the thiolase-like superfamily. FabH family. As to quaternary structure, homodimer.

The protein resides in the cytoplasm. It catalyses the reaction malonyl-[ACP] + acetyl-CoA + H(+) = 3-oxobutanoyl-[ACP] + CO2 + CoA. Its pathway is lipid metabolism; fatty acid biosynthesis. Catalyzes the condensation reaction of fatty acid synthesis by the addition to an acyl acceptor of two carbons from malonyl-ACP. Catalyzes the first condensation reaction which initiates fatty acid synthesis and may therefore play a role in governing the total rate of fatty acid production. Possesses both acetoacetyl-ACP synthase and acetyl transacylase activities. Its substrate specificity determines the biosynthesis of branched-chain and/or straight-chain of fatty acids. In Wolbachia sp. subsp. Brugia malayi (strain TRS), this protein is Beta-ketoacyl-[acyl-carrier-protein] synthase III.